Here is a 59-residue protein sequence, read N- to C-terminus: Large ribosomal subunit protein bL32 (59 aa).

The interval 1-23 is disordered; the sequence is MAVQQNKKSPSKRGMHRSHDFLT.

This sequence belongs to the bacterial ribosomal protein bL32 family.

The polypeptide is Large ribosomal subunit protein bL32 (Burkholderia multivorans (strain ATCC 17616 / 249)).